The following is an 89-amino-acid chain: Large ribosomal subunit protein bL27 (89 aa).

The protein belongs to the bacterial ribosomal protein bL27 family.

The sequence is that of Large ribosomal subunit protein bL27 from Cytophaga hutchinsonii (strain ATCC 33406 / DSM 1761 / CIP 103989 / NBRC 15051 / NCIMB 9469 / D465).